Here is a 78-residue protein sequence, read N- to C-terminus: Large ribosomal subunit protein bL28 (78 aa).

It belongs to the bacterial ribosomal protein bL28 family.

The polypeptide is Large ribosomal subunit protein bL28 (Corynebacterium aurimucosum (strain ATCC 700975 / DSM 44827 / CIP 107346 / CN-1) (Corynebacterium nigricans)).